We begin with the raw amino-acid sequence, 391 residues long: Thioredoxin-interacting protein (391 aa).

Lysine 212 participates in a covalent cross-link: Glycyl lysine isopeptide (Lys-Gly) (interchain with G-Cter in ubiquitin). A Phosphoserine modification is found at serine 361.

This sequence belongs to the arrestin family. In terms of assembly, homodimer; disulfide-linked. Interacts with TXN/thioredoxin through its redox-active site. Interacts with transcriptional repressors ZBTB16, ZBTB32 and HDAC1. Interacts with DDIT4. Post-translationally, ubiquitinated; undergoes heterotypic 'Lys-48'-/'Lys-63'-branched polyubiquitination catalyzed by ITCH and UBR5 resulting in proteasomal degradation. Deubiquitinated by USP5, leading to TXNIP stabilization.

The protein resides in the cytoplasm. May act as an oxidative stress mediator by inhibiting thioredoxin activity or by limiting its bioavailability. Interacts with COPS5 and restores COPS5-induced suppression of CDKN1B stability, blocking the COPS5-mediated translocation of CDKN1B from the nucleus to the cytoplasm. Functions as a transcriptional repressor, possibly by acting as a bridge molecule between transcription factors and corepressor complexes, and over-expression will induce G0/G1 cell cycle arrest. Required for the maturation of natural killer cells. Acts as a suppressor of tumor cell growth. Inhibits the proteasomal degradation of DDIT4, and thereby contributes to the inhibition of the mammalian target of rapamycin complex 1 (mTORC1). The polypeptide is Thioredoxin-interacting protein (TXNIP) (Pongo abelii (Sumatran orangutan)).